The sequence spans 64 residues: MFAMVTVTVLLLISSGIFCENEKLCSNGGTKCTHHCGKNNTVGICHGQNGNLKCECVEYKRKMF.

Residues 1-19 (MFAMVTVTVLLLISSGIFC) form the signal peptide. Cystine bridges form between C25-C45, C32-C54, and C36-C56.

Expressed by the venom gland.

The protein resides in the secreted. The polypeptide is Putative neurotoxin-G (Lychas mucronatus (Chinese swimming scorpion)).